The chain runs to 361 residues: MLYWLIDLSSSFPAFNVFRYITFRTGGAMVTGALFVFMFGPWIIDNLRLRQGKGQPIRTDGPQSHLMTKKGTPTMGGLMILSGLTVGTLLWANPLNPYVWIVLAVTLGFGFVGFYDDYMKVTKQTHAGISGRTRLLIEFTIAGAACFALVWLGRAPLSSSLVIPFFKEVMLNLGWAFVVFGAFVVVGAGNAVNLTDGLDGLAIVPVMIAAASFGLISYLAGNAVFAEYLQINYVAGTGELAVLCGALLGAGLGFLWFNAPPASIFMGDTGSLALGGMLGSIAVAVKHEIVLAVIGGLFVLEAVSVIVQVASFKLTGKRVFKMAPIHHHFEQKGWTEPQIVIRFWIIAVMLALAGLSTLKLR.

10 helical membrane-spanning segments follow: residues 25–45 (TGGA…WIID), 72–92 (TPTM…LLWA), 95–115 (LNPY…VGFY), 135–155 (LLIE…LGRA), 169–189 (VMLN…VGAG), 200–220 (GLAI…SYLA), 240–260 (LAVL…FNAP), 264–284 (IFMG…IAVA), 289–309 (IVLA…IVQV), and 338–358 (QIVI…LSTL).

This sequence belongs to the glycosyltransferase 4 family. MraY subfamily. Mg(2+) is required as a cofactor.

It localises to the cell inner membrane. It catalyses the reaction UDP-N-acetyl-alpha-D-muramoyl-L-alanyl-gamma-D-glutamyl-meso-2,6-diaminopimeloyl-D-alanyl-D-alanine + di-trans,octa-cis-undecaprenyl phosphate = di-trans,octa-cis-undecaprenyl diphospho-N-acetyl-alpha-D-muramoyl-L-alanyl-D-glutamyl-meso-2,6-diaminopimeloyl-D-alanyl-D-alanine + UMP. It participates in cell wall biogenesis; peptidoglycan biosynthesis. Functionally, catalyzes the initial step of the lipid cycle reactions in the biosynthesis of the cell wall peptidoglycan: transfers peptidoglycan precursor phospho-MurNAc-pentapeptide from UDP-MurNAc-pentapeptide onto the lipid carrier undecaprenyl phosphate, yielding undecaprenyl-pyrophosphoryl-MurNAc-pentapeptide, known as lipid I. The protein is Phospho-N-acetylmuramoyl-pentapeptide-transferase of Rhodopseudomonas palustris (strain ATCC BAA-98 / CGA009).